The chain runs to 85 residues: Beta-insect depressant toxin BjIT2 (85 aa).

Residues 1–21 (MKLLLLLVISASMLLECLVNA) form the signal peptide. Residues 22–82 (DGYIRKKDGC…TWKSSTNTCG (61 aa)) enclose the LCN-type CS-alpha/beta domain. 4 cysteine pairs are disulfide-bonded: cysteine 31/cysteine 81, cysteine 35/cysteine 56, cysteine 42/cysteine 63, and cysteine 46/cysteine 65. The propeptide at 83-85 (RKK) is removed by a carboxypeptidase.

This sequence belongs to the long (4 C-C) scorpion toxin superfamily. Sodium channel inhibitor family. Beta subfamily. C-terminal basic residues are removed by a carboxypeptidase. Expressed by the venom gland.

The protein resides in the secreted. Depressant insect beta-toxins cause a transient contraction paralysis followed by a slow flaccid paralysis. They bind voltage-independently at site-4 of sodium channels (Nav) and shift the voltage of activation toward more negative potentials thereby affecting sodium channel activation and promoting spontaneous and repetitive firing. This toxin is active only on insects. The protein is Beta-insect depressant toxin BjIT2 of Hottentotta judaicus (Black scorpion).